The following is a 191-amino-acid chain: MAYSTREILLALCIRDSRVHGNGTLHPVLELAARETPLRLSPEDTVVLRYHVLLEEIIERNSETFTETWNRFITHTEHVDLDFNSVFLEIFHRGDPSLGRALAWMAWCMHACRTLCCNQSTPYYVVDLSVRGMLEASEGLDGWIHQQGGWSTLIEDNIPGSRRFSWTLFLAGLTLSLLVICSYLFISRGRH.

The interval 1-18 (MAYSTREILLALCIRDSR) is interaction with host VRK2. An N-linked (GlcNAc...) asparagine; by host glycan is attached at asparagine 22. Positions 89-109 (EIFHRGDPSLGRALAWMAWCM) match the BH1 motif. Positions 89–142 (EIFHRGDPSLGRALAWMAWCMHACRTLCCNQSTPYYVVDLSVRGMLEASEGLDG) are interaction with host VRK2. N-linked (GlcNAc...) asparagine; by host glycosylation is present at asparagine 118. A BH2 motif is present at residues 142–157 (GWIHQQGGWSTLIEDN). A helical transmembrane segment spans residues 166–186 (WTLFLAGLTLSLLVICSYLFI).

Belongs to the Bcl-2 family. Interacts with isoform 1 of host VRK2; this interaction is involved in protecting cells from apoptosis. Interacts with host PRA1; this interaction seems to modulate BHRF1 anti-apoptotic activity. Interacts with host BCL2L11. Interacts with host BAD and BBC3. Interacts with BALF1; BALF1 acting as a negative regulator of the survival function of BHRF1. Interacts with host BECN1.

The protein resides in the host membrane. Its subcellular location is the host mitochondrion. Prevents premature death of the host cell during virus production, which would otherwise reduce the amount of progeny virus. Acts as a host B-cell leukemia/lymphoma 2 (Bcl-2) homolog, and interacts with pro-apoptotic proteins to prevent mitochondria permeabilization, release of cytochrome c and subsequent apoptosis of the host cell. In addition, plays a role in the inhibiton of host BECN1-mediated starvation-induced autophagy without affecting basal levels of autophagy. The polypeptide is Apoptosis regulator BHRF1 (Homo sapiens (Human)).